The primary structure comprises 309 residues: Diacylglycerol kinase (309 aa).

In terms of domain architecture, DAGKc spans 9–140 (HEIGKVTALT…IDLGRIQDDN (132 aa)). Residues 19–23 (NPLSG), 76–82 (GDGVVSN), and T101 each bind ATP. The Mg(2+) site is built by D226, D229, and L231. D285 serves as the catalytic Proton acceptor.

Belongs to the diacylglycerol/lipid kinase family. Requires Mg(2+) as cofactor.

The protein resides in the secreted. The protein localises to the cell wall. The enzyme catalyses a 1,2-diacyl-sn-glycerol + ATP = a 1,2-diacyl-sn-glycero-3-phosphate + ADP + H(+). It carries out the reaction N-hexadecanoylsphing-4-enine + ATP = N-(hexadecanoyl)-sphing-4-enine-1-phosphate + ADP + H(+). In terms of biological role, catalyzes the phosphorylation of diacylglycerol (DAG) into phosphatidic acid. Is involved in the biosynthesis of phosphatidylinositol mannosides (PIMs), probably via a role in the biosynthesis of phosphatidylinositol (PI), a PIM precursor, which is derived from phosphatidic acid. Is also able to phosphorylate other various amphipathic lipids of host and bacterial origin in vitro, such as ceramide. In Mycobacterium tuberculosis (strain CDC 1551 / Oshkosh), this protein is Diacylglycerol kinase (dagK).